Reading from the N-terminus, the 721-residue chain is Mitogen-activated protein kinase 6 (721 aa).

The 297-residue stretch at 20 to 316 (YMDLKPLGCG…AEEALSHPYM (297 aa)) folds into the Protein kinase domain. Residues 26–34 (LGCGGNGLV) and Lys49 contribute to the ATP site. Catalysis depends on Asp152, which acts as the Proton acceptor. Thr626 carries the post-translational modification Phosphothreonine. The TXY motif lies at 626–628 (TSY). Residue Tyr628 is modified to Phosphotyrosine.

This sequence belongs to the protein kinase superfamily. CMGC Ser/Thr protein kinase family. MAP kinase subfamily. The cofactor is Mg(2+). In terms of processing, dually phosphorylated on Thr-626 and Tyr-628, which activates the enzyme.

It catalyses the reaction L-seryl-[protein] + ATP = O-phospho-L-seryl-[protein] + ADP + H(+). The enzyme catalyses L-threonyl-[protein] + ATP = O-phospho-L-threonyl-[protein] + ADP + H(+). Activated by threonine and tyrosine phosphorylation. Functionally, phosphorylates microtubule-associated protein 2 (MAP2). May promote entry in the cell cycle. The chain is Mitogen-activated protein kinase 6 (MAPK6) from Gallus gallus (Chicken).